Consider the following 197-residue polypeptide: Protein lin-7 homolog C (197 aa).

Residue A2 is modified to N-acetylalanine. Positions 2–13 (AALGEPVRLERD) match the Kinase interacting site motif. Positions 10–65 (LERDICRAIELLEKLQRSGEVPPQKLQALQRVLQSEFCNAVREVYEHVYETVDISS) constitute an L27 domain. The PDZ domain maps to 93-175 (VVELPKTEEG…KVKLVVRYTP (83 aa)).

It belongs to the lin-7 family. Forms a complex with CASK and APBA1 or CASKIN1. Component of the brain-specific heterotrimeric complex (LIN-10-LIN-2-LIN-7 complex) composed of at least APBA1, CASK, and LIN7, which associates with the motor protein KIF17 to transport vesicles along microtubules. Can also interact with other modular proteins containing protein-protein interaction domains like PALS1, PALS2, MPP7, DLG1, DLG2 and DLG3 through its L27 domain. Interacts with DLG4 and GRIN2B as well as CDH1 and CTNNB1, the channels KCNJ12/Kir2.2, KCNJ4/Kir2.3 and probably KCNJ2/Kir2.1 and SLC6A12/BGT-1 via its PDZ domain. The association of LIN7A with cadherin and beta-catenin is calcium-dependent, occurs at synaptic junctions and requires the actin cytoskeleton. Interacts with EGFR, ERBB2, ERBB3 and ERBB4 with both PDZ and KID domains. Associates with KIF17 via APBA1. Interacts with HTR4. Forms a tripartite complex composed of DLG1, MPP7 and LIN7 (LIN7A or LIN7C). Interacts with MAPK12.

The protein localises to the cell membrane. It is found in the basolateral cell membrane. Its subcellular location is the cell junction. The protein resides in the postsynaptic density membrane. It localises to the tight junction. The protein localises to the synapse. It is found in the synaptosome. Plays a role in establishing and maintaining the asymmetric distribution of channels and receptors at the plasma membrane of polarized cells. Forms membrane-associated multiprotein complexes that may regulate delivery and recycling of proteins to the correct membrane domains. The tripartite complex composed of LIN7 (LIN7A, LIN7B or LIN7C), CASK and APBA1 associates with the motor protein KIF17 to transport vesicles containing N-methyl-D-aspartate (NMDA) receptor subunit NR2B along microtubules. This complex may have the potential to couple synaptic vesicle exocytosis to cell adhesion in brain. Ensures the proper localization of GRIN2B (subunit 2B of the NMDA receptor) to neuronal postsynaptic density and may function in localizing synaptic vesicles at synapses where it is recruited by beta-catenin and cadherin. Required to localize Kir2 channels, GABA transporter (SLC6A12) and EGFR/ERBB1, ERBB2, ERBB3 and ERBB4 to the basolateral membrane of epithelial cells. The sequence is that of Protein lin-7 homolog C (LIN7C) from Bos taurus (Bovine).